We begin with the raw amino-acid sequence, 475 residues long: NADH-ubiquinone oxidoreductase chain 2 (475 aa).

13 consecutive transmembrane segments (helical) span residues 45–65 (LAVL…GIQY), 82–102 (APIV…LTTT), 112–132 (IALL…VNDL), 133–153 (IPLY…TGVY), 162–182 (AAIL…LSSA), 198–220 (TYYS…ALVF), 240–260 (LYIT…FIYL), 262–282 (IHLF…AVAA), 291–311 (IKSI…TAVL), 318–338 (YIYI…ILAI), 365–385 (LCIA…LPGF), 402–422 (LEAL…AYII), and 447–467 (FIIS…PTLL).

The protein belongs to the complex I subunit 2 family.

Its subcellular location is the mitochondrion inner membrane. It catalyses the reaction a ubiquinone + NADH + 5 H(+)(in) = a ubiquinol + NAD(+) + 4 H(+)(out). In terms of biological role, core subunit of the mitochondrial membrane respiratory chain NADH dehydrogenase (Complex I) that is believed to belong to the minimal assembly required for catalysis. Complex I functions in the transfer of electrons from NADH to the respiratory chain. The immediate electron acceptor for the enzyme is believed to be ubiquinone. The protein is NADH-ubiquinone oxidoreductase chain 2 (NAD2) of Candida albicans (strain SC5314 / ATCC MYA-2876) (Yeast).